Reading from the N-terminus, the 416-residue chain is Iron/alpha-ketoglutarate-dependent dioxygenase asqJ (416 aa).

The interval 1–53 (MGYPKAFTSSDSEPEPDLSRDLGNPVMGNPGVVSRSSSTVAQHSVRNNPTGPD) is disordered. A compositionally biased stretch (polar residues) spans 34-50 (SRSSSTVAQHSVRNNPT). Fe cation-binding residues include His-242, Asp-244, and His-319.

The protein belongs to the PhyH family. In terms of assembly, homodimer. It depends on Fe cation as a cofactor.

It carries out the reaction (-)-4'-methoxycyclopeptine + 2-oxoglutarate + O2 = (Z)-4'-methoxydehydrocyclopeptine + succinate + CO2 + H2O. The enzyme catalyses (Z)-4'-methoxydehydrocyclopeptine + 2-oxoglutarate + O2 = (-)-4'-methoxycyclopenine + succinate + CO2. The catalysed reaction is (-)-cyclopeptine + 2-oxoglutarate + O2 = (Z)-dehydrocyclopeptine + succinate + CO2 + H2O. It catalyses the reaction (Z)-dehydrocyclopeptine + 2-oxoglutarate + O2 = (-)-cyclopenine + succinate + CO2. The protein operates within secondary metabolite biosynthesis. It functions in the pathway alkaloid biosynthesis. It participates in mycotoxin biosynthesis. Functionally, iron/alpha-ketoglutarate-dependent dioxygenase; part of the gene cluster that mediates the biosynthesis of the aspoquinolone mycotoxins. Within the pathway, the iron/alpha-ketoglutarate-dependent dioxygenase asqJ acts as a (-)-cyclopenine synthase that converts 4'-methoxycyclopeptin into 4'-methoxydehydrocyclopeptin through dehydrogenation to form a double bond between C-alpha and C-beta of the O-methyltyrosine side chain. AsqJ is a very unique dioxygenase which is capable of catalyzing radical-mediated dehydrogenation and epoxidation reactions sequentially on a 6,7-benzo-diazepinedione substrate in the 4'-methoxyviridicatin biosynthetic pathway. AsqJ is also capable of converting cyclopeptin into dehydrocyclopeptin. The first step of the pathway is catalyzed by the nonribosomal peptide synthetase asqK that condenses anthranilic acid and O-methyl-L-tyrosine to produce 4'-methoxycyclopeptin. 4'-methoxycyclopeptin is then converted to 4'-methoxydehydrocyclopeptin by the ketoglutarate-dependent dioxygenase asqJ. AsqJ also converts its first product 4'-methoxydehydrocyclopeptin to 4'-methoxycyclopenin. The following conversion of 4'-methoxycyclopenin into 4'-methoxyviridicatin is catalyzed by the cyclopenase asqI. 4'-methoxyviridicatin is the precursor of quinolone natural products, and is further converted to quinolinone B. The prenyltransferase asqH1 then catalyzes the canonical Friedel-Crafts alkylation of quinolinone B with dimethylallyl cation to yield dimethylallyl quinolone, which is subjected to FAD-dependent dehydrogenation by the FAD-linked oxidoreductase asqF to yield conjugated aryl diene. The delta(3') double bond then serves as the site of the second alkylation with DMAPP catalyzed by the prenyltransferase asqH2 to yield a carbenium ion intermediate, which can be attacked by H(2)O to yield a styrenyl quinolone containing a C3'-hydroxyprenyl chain. The FAD-dependent monooxygenase asqG performs epoxidation of the terminal C7'-C8' olefin. Finally, after dehydratation of the epoxide at C3 by asqC, the quinolone epoxide rearrangement protein asqO catalyzes an enzymatic 3-exo-tet cyclization to yield the cyclopropyl-THF ring system in aspoquinolone. This Emericella nidulans (strain FGSC A4 / ATCC 38163 / CBS 112.46 / NRRL 194 / M139) (Aspergillus nidulans) protein is Iron/alpha-ketoglutarate-dependent dioxygenase asqJ.